The following is a 296-amino-acid chain: tRNA pseudouridine synthase B (296 aa).

The active-site Nucleophile is the aspartate 38.

This sequence belongs to the pseudouridine synthase TruB family. Type 1 subfamily.

The enzyme catalyses uridine(55) in tRNA = pseudouridine(55) in tRNA. Responsible for synthesis of pseudouridine from uracil-55 in the psi GC loop of transfer RNAs. In Synechocystis sp. (strain ATCC 27184 / PCC 6803 / Kazusa), this protein is tRNA pseudouridine synthase B.